The chain runs to 132 residues: Small ribosomal subunit protein uS8 (132 aa).

Belongs to the universal ribosomal protein uS8 family. As to quaternary structure, part of the 30S ribosomal subunit. Contacts proteins S5 and S12.

Its function is as follows. One of the primary rRNA binding proteins, it binds directly to 16S rRNA central domain where it helps coordinate assembly of the platform of the 30S subunit. The polypeptide is Small ribosomal subunit protein uS8 (Afipia carboxidovorans (strain ATCC 49405 / DSM 1227 / KCTC 32145 / OM5) (Oligotropha carboxidovorans)).